The following is a 156-amino-acid chain: Small ribosomal subunit protein uS7 (156 aa).

This sequence belongs to the universal ribosomal protein uS7 family. In terms of assembly, part of the 30S ribosomal subunit. Contacts proteins S9 and S11.

Functionally, one of the primary rRNA binding proteins, it binds directly to 16S rRNA where it nucleates assembly of the head domain of the 30S subunit. Is located at the subunit interface close to the decoding center, probably blocks exit of the E-site tRNA. This is Small ribosomal subunit protein uS7 from Bordetella bronchiseptica (strain ATCC BAA-588 / NCTC 13252 / RB50) (Alcaligenes bronchisepticus).